Here is a 198-residue protein sequence, read N- to C-terminus: Recombination protein RecR (198 aa).

Residues 58–73 form a C4-type zinc finger; it reads CLNCGNVGTSDICDIC. Residues 81 to 175 form the Toprim domain; that stretch reads GELCVVEDVA…RLTSLAQGVP (95 aa).

Belongs to the RecR family.

Its function is as follows. May play a role in DNA repair. It seems to be involved in an RecBC-independent recombinational process of DNA repair. It may act with RecF and RecO. The protein is Recombination protein RecR of Ruegeria pomeroyi (strain ATCC 700808 / DSM 15171 / DSS-3) (Silicibacter pomeroyi).